An 82-amino-acid polypeptide reads, in one-letter code: NADH-ubiquinone oxidoreductase 9.5 kDa subunit (82 aa).

The helical transmembrane segment at 25-43 threads the bilayer; it reads AYFYSCVIAGLGPVFLTVV.

Belongs to the complex I NDUFA3 subunit family. Complex I is composed of about 40 different subunits.

The protein resides in the mitochondrion inner membrane. Its function is as follows. Accessory subunit of the mitochondrial membrane respiratory chain NADH dehydrogenase (Complex I), that is believed not to be involved in catalysis. Complex I functions in the transfer of electrons from NADH to the respiratory chain. The immediate electron acceptor for the enzyme is believed to be ubiquinone. This subunit binds ubiquinone. The polypeptide is NADH-ubiquinone oxidoreductase 9.5 kDa subunit (nuo9.5) (Neurospora crassa (strain ATCC 24698 / 74-OR23-1A / CBS 708.71 / DSM 1257 / FGSC 987)).